The following is a 206-amino-acid chain: Small ribosomal subunit protein eS1 (206 aa).

Belongs to the eukaryotic ribosomal protein eS1 family.

The sequence is that of Small ribosomal subunit protein eS1 from Natronomonas pharaonis (strain ATCC 35678 / DSM 2160 / CIP 103997 / JCM 8858 / NBRC 14720 / NCIMB 2260 / Gabara) (Halobacterium pharaonis).